The sequence spans 37 residues: Large ribosomal subunit protein bL36 (37 aa).

Belongs to the bacterial ribosomal protein bL36 family.

The sequence is that of Large ribosomal subunit protein bL36 from Psychromonas ingrahamii (strain DSM 17664 / CCUG 51855 / 37).